A 752-amino-acid polypeptide reads, in one-letter code: Neuroendocrine convertase 1 (752 aa).

An N-terminal signal peptide occupies residues 1-27 (MKQRGWTLQCTAFTLFCVWCALNSVKA). The propeptide occupies 28-110 (KRQFVNEWAA…QQYEKERRKR (83 aa)). A Peptidase S8 domain is found at 129–450 (QWYLQDTRMT…FGLLNAKALV (322 aa)). Asp167 (charge relay system) is an active-site residue. Asn173 carries N-linked (GlcNAc...) asparagine glycosylation. His208 acts as the Charge relay system in catalysis. 2 disulfide bridges follow: Cys225/Cys374 and Cys317/Cys347. The active-site Charge relay system is the Ser382. The N-linked (GlcNAc...) asparagine glycan is linked to Asn401. A P/Homo B domain is found at 460-597 (NVPEKKECII…KLILHGTSSQ (138 aa)). Cys467 and Cys494 are joined by a disulfide. A disordered region spans residues 631-662 (PTQNSLNGNLLVPKNSSSSSVEDRRDEQVQGA). Asn645 is a glycosylation site (N-linked (GlcNAc...) asparagine).

This sequence belongs to the peptidase S8 family. Furin subfamily. Requires Ca(2+) as cofactor.

It is found in the cytoplasmic vesicle. The protein resides in the secretory vesicle. It carries out the reaction Release of protein hormones, neuropeptides and renin from their precursors, generally by hydrolysis of -Lys-Arg-|- bonds.. In terms of biological role, involved in the processing of hormone and other protein precursors at sites comprised of pairs of basic amino acid residues. Substrates include POMC, renin, enkephalin, dynorphin, somatostatin, insulin and AGRP. In Rattus norvegicus (Rat), this protein is Neuroendocrine convertase 1 (Pcsk1).